A 932-amino-acid polypeptide reads, in one-letter code: 2-oxoglutarate dehydrogenase E1 component (932 aa).

The protein belongs to the alpha-ketoglutarate dehydrogenase family. In terms of assembly, homodimer. Part of the 2-oxoglutarate dehydrogenase (OGDH) complex composed of E1 (2-oxoglutarate dehydrogenase), E2 (dihydrolipoamide succinyltransferase) and E3 (dihydrolipoamide dehydrogenase); the complex contains multiple copies of the three enzymatic components (E1, E2 and E3). Thiamine diphosphate serves as cofactor.

The catalysed reaction is N(6)-[(R)-lipoyl]-L-lysyl-[protein] + 2-oxoglutarate + H(+) = N(6)-[(R)-S(8)-succinyldihydrolipoyl]-L-lysyl-[protein] + CO2. Its function is as follows. E1 component of the 2-oxoglutarate dehydrogenase (OGDH) complex which catalyzes the decarboxylation of 2-oxoglutarate, the first step in the conversion of 2-oxoglutarate to succinyl-CoA and CO(2). The polypeptide is 2-oxoglutarate dehydrogenase E1 component (Staphylococcus aureus (strain bovine RF122 / ET3-1)).